Consider the following 220-residue polypeptide: Probable septum site-determining protein MinC (220 aa).

It belongs to the MinC family. In terms of assembly, interacts with MinD and FtsZ.

Functionally, cell division inhibitor that blocks the formation of polar Z ring septums. Rapidly oscillates between the poles of the cell to destabilize FtsZ filaments that have formed before they mature into polar Z rings. Prevents FtsZ polymerization. The chain is Probable septum site-determining protein MinC from Vibrio parahaemolyticus serotype O3:K6 (strain RIMD 2210633).